The sequence spans 255 residues: MKRLNKLVLGIIFLFLVISITAGCGIGKEAKIKKSFEKTLSMYPIKNLEDLYDKEGYRDDEFDKNDKGTWIIGSEMATQNKGEALKVKGMVLYMNRNTKTTKGYYYVNAIKNDKDGRPQENEKRYPVKMVDNKIIPTKEIKDKNIKKEIENFKFFVQYGNFKDLSKYKDGDISYNPEVPSYSAKYQLTNDDYNVKQLRKRYDIPTNKAPKLLLKGTGNLKGSSVGYKDIEFTFVEKKEENIYFSDGLIFKPSEDK.

An N-terminal signal peptide occupies residues 1–23 (MKRLNKLVLGIIFLFLVISITAG). A lipid anchor (N-palmitoyl cysteine) is attached at Cys-24. Cys-24 carries the S-diacylglycerol cysteine lipid modification.

Belongs to the staphylococcal tandem lipoprotein family.

Its subcellular location is the cell membrane. This is an uncharacterized protein from Staphylococcus aureus (strain USA300).